Consider the following 245-residue polypeptide: Orotidine 5'-phosphate decarboxylase (245 aa).

Substrate contacts are provided by residues aspartate 22, lysine 44, 71–80, threonine 131, arginine 192, glutamine 201, glycine 221, and arginine 222; that span reads DLKFHDIPNT. The Proton donor role is filled by lysine 73.

This sequence belongs to the OMP decarboxylase family. Type 1 subfamily. Homodimer.

It carries out the reaction orotidine 5'-phosphate + H(+) = UMP + CO2. Its pathway is pyrimidine metabolism; UMP biosynthesis via de novo pathway; UMP from orotate: step 2/2. Functionally, catalyzes the decarboxylation of orotidine 5'-monophosphate (OMP) to uridine 5'-monophosphate (UMP). This chain is Orotidine 5'-phosphate decarboxylase, found in Escherichia coli (strain 55989 / EAEC).